A 340-amino-acid polypeptide reads, in one-letter code: ATP-dependent 6-phosphofructokinase (340 aa).

Glycine 11 serves as a coordination point for ATP. 21–25 serves as a coordination point for ADP; the sequence is RAVVR. ATP-binding positions include 72-73 and 102-105; these read RY and GDGS. Residue aspartate 103 participates in Mg(2+) binding. 125-127 lines the substrate pocket; sequence TID. The active-site Proton acceptor is the aspartate 127. Arginine 154 is an ADP binding site. Substrate contacts are provided by residues arginine 162 and 169-171; that span reads MGR. ADP contacts are provided by residues 185–187, lysine 211, and 213–215; these read GAD and KNH. Substrate-binding positions include glutamate 222, arginine 244, and 250-253; that span reads HIQR.

It belongs to the phosphofructokinase type A (PFKA) family. ATP-dependent PFK group I subfamily. Prokaryotic clade 'B1' sub-subfamily. Homotetramer. Requires Mg(2+) as cofactor.

Its subcellular location is the cytoplasm. The catalysed reaction is beta-D-fructose 6-phosphate + ATP = beta-D-fructose 1,6-bisphosphate + ADP + H(+). It participates in carbohydrate degradation; glycolysis; D-glyceraldehyde 3-phosphate and glycerone phosphate from D-glucose: step 3/4. Allosterically activated by ADP and other diphosphonucleosides, and allosterically inhibited by phosphoenolpyruvate. Catalyzes the phosphorylation of D-fructose 6-phosphate to fructose 1,6-bisphosphate by ATP, the first committing step of glycolysis. The polypeptide is ATP-dependent 6-phosphofructokinase (Lactococcus lactis subsp. lactis (Streptococcus lactis)).